The primary structure comprises 169 residues: Nucleoside diphosphate kinase 3 (169 aa).

ADP contacts are provided by lysine 29, arginine 105, threonine 111, arginine 122, valine 129, and asparagine 132. Catalysis depends on histidine 135, which acts as the Pros-phosphohistidine intermediate.

It belongs to the NDK family. In terms of assembly, homohexamer. Interacts (via its N-terminal region) with KAT5; this interaction enables recruitment of NME3 at DNA damage sites where it plays a role in the repair of DNA. Found in association with several ciliary nephronophthisis proteins, including NEK8, CEP164, ANKS6. Requires Mg(2+) as cofactor.

The protein localises to the mitochondrion outer membrane. The protein resides in the cytoplasm. It localises to the cytoskeleton. It is found in the cilium basal body. The enzyme catalyses a 2'-deoxyribonucleoside 5'-diphosphate + ATP = a 2'-deoxyribonucleoside 5'-triphosphate + ADP. It catalyses the reaction a ribonucleoside 5'-diphosphate + ATP = a ribonucleoside 5'-triphosphate + ADP. In terms of biological role, catalyzes the phosphorylation of ribonucleosides and deoxyribonucleoside diphosphates, other than ATP, into the corresponding triphosphates with ATP as the major phosphate donor. The ATP gamma phosphate is transferred to the nucleoside diphosphate beta phosphate via a ping-pong mechanism, using a phosphorylated active-site intermediate. Through the catalyzed exchange of gamma-phosphate between di- and triphosphonucleosides participates in regulation of intracellular nucleotide homeostasis. Inhibits granulocyte differentiation. May be required for ciliary function during renal development. Its function is as follows. Independently of its kinase activity, facilitates mitochondrial tethering prior to membrane fusion through its direct membrane-binding and hexamerization. Implicated in repair of both single- and double-stranded breaks in DNA through its association with the ribonucleotide reductase complex (RNR complex) via its interaction with the histone acetyltransferase KAT5, this interaction enables recruitment of NME3 at DNA damage sites where it plays a role in the repair of DNA, independently of its kinase activity. This chain is Nucleoside diphosphate kinase 3, found in Homo sapiens (Human).